The primary structure comprises 541 residues: Protein wntless homolog (541 aa).

The Cytoplasmic segment spans residues 1–15; sequence MAGAIIENMSTKKLC. Residues 16–36 form a helical membrane-spanning segment; it reads IVGGILLVFQIVAFLVGGLIA. Over 37–232 the chain is Lumenal; that stretch reads PAPTTAVSYV…GIHQNGGFTK (196 aa). The tract at residues 101–202 is interaction with Wnt proteins; it reads MEMSPWFQFM…KYYLLNIRLP (102 aa). The helical transmembrane segment at 233–253 threads the bilayer; that stretch reads VWFAMKTFLTPSIFIIMVWYW. The Cytoplasmic segment spans residues 254–268; the sequence is RRITMMSRPPVLLEK. The chain crosses the membrane as a helical span at residues 269–289; the sequence is VIFALGISMTFINIPVEWFSI. Topologically, residues 290-303 are lumenal; sequence GFDWTWMLLFGDIR. Residues 304 to 324 traverse the membrane as a helical segment; that stretch reads QGIFYAMLLSFWIIFCGEHMM. The Cytoplasmic segment spans residues 325-331; it reads DQHERNH. The helical transmembrane segment at 332–352 threads the bilayer; sequence IAGYWKQVGPIAVGSFCLFIF. Topologically, residues 353 to 380 are lumenal; sequence DMCERGVQLTNPFYSIWTTDVGTELAMA. A helical transmembrane segment spans residues 381–401; the sequence is FIIVAGICLCLYFLFLCFMVF. Topologically, residues 402–431 are cytoplasmic; that stretch reads QVFRNISGKQSSLPAMSKVRRLHYEGLIFR. Residues 432 to 452 traverse the membrane as a helical segment; it reads FKFLMLITLACAAMTVIFFIV. The Lumenal segment spans residues 453–471; the sequence is SQVTEGHWKWGGVTVQVSS. A helical membrane pass occupies residues 472-492; it reads AFFTGIYGMWNLYVFALMFLY. Over 493-541 the chain is Cytoplasmic; it reads APSHKNYGEDQSNGDLGVHSGEELQLTTTITHVDGPTEIYKLTRKEAQE.

The protein belongs to the wntless family. In terms of assembly, interacts with WNT3A. Interacts with WNT1, WNT3 and WNT5A. In terms of processing, N-glycosylated. In terms of tissue distribution, expressed in the brain, skeletal muscle, heart muscle, lung, gut, liver, and kidney (at protein level). In the brain, expressed in the cortex, striatum, ventral tegmentum, nucleus accumbens and to a lesser extent in the Purkinjie cells in the cerebellum. Expressed in eye iridocorneal angle.

The protein localises to the golgi apparatus membrane. It is found in the cytoplasmic vesicle membrane. It localises to the cell membrane. The protein resides in the endoplasmic reticulum membrane. Its subcellular location is the early endosome membrane. In terms of biological role, regulates Wnt proteins sorting and secretion in a feedback regulatory mechanism. This reciprocal interaction plays a key role in the regulation of expression, subcellular location, binding and organelle-specific association of Wnt proteins. Also plays an important role in establishment of the anterior-posterior body axis formation during development. This is Protein wntless homolog (Wls) from Rattus norvegicus (Rat).